Reading from the N-terminus, the 299-residue chain is N-carbamoylputrescine amidase (299 aa).

Positions 10-268 (VVVSSLQFAC…EAVLVAQFDL (259 aa)) constitute a CN hydrolase domain. Residue Glu49 is the Proton acceptor of the active site. Lys122 acts as the Proton donor in catalysis. Cys159 serves as the catalytic Nucleophile.

This sequence belongs to the carbon-nitrogen hydrolase superfamily. In terms of assembly, homooctamer (isoform 2). Expressed in roots, stems, leaves and flowers.

It carries out the reaction N-carbamoylputrescine + H2O + 2 H(+) = putrescine + NH4(+) + CO2. It functions in the pathway amine and polyamine biosynthesis; putrescine biosynthesis via agmatine pathway; putrescine from N-carbamoylputrescine (amidase route): step 1/1. Its function is as follows. Involved in polyamine biosynthesis. Catalyzes the hydrolysis of N-carbamoylputrescine to produce putrescine and ammonia. In Arabidopsis thaliana (Mouse-ear cress), this protein is N-carbamoylputrescine amidase.